Here is a 396-residue protein sequence, read N- to C-terminus: Elongation factor Tu (396 aa).

Residues 10–206 (KPHVNVGTIG…ALDTYIPTPE (197 aa)) form the tr-type G domain. Residues 19-26 (GHVDHGKT) form a G1 region. 19-26 (GHVDHGKT) contributes to the GTP binding site. Threonine 26 provides a ligand contact to Mg(2+). Residues 60–64 (GITIN) form a G2 region. The G3 stretch occupies residues 81 to 84 (DCPG). GTP is bound by residues 81-85 (DCPGH) and 136-139 (NKAD). A G4 region spans residues 136–139 (NKAD). The G5 stretch occupies residues 174–176 (SAK).

The protein belongs to the TRAFAC class translation factor GTPase superfamily. Classic translation factor GTPase family. EF-Tu/EF-1A subfamily. In terms of assembly, monomer.

Its subcellular location is the cytoplasm. It carries out the reaction GTP + H2O = GDP + phosphate + H(+). Functionally, GTP hydrolase that promotes the GTP-dependent binding of aminoacyl-tRNA to the A-site of ribosomes during protein biosynthesis. The polypeptide is Elongation factor Tu (Bordetella avium (strain 197N)).